A 156-amino-acid chain; its full sequence is 6,7-dimethyl-8-ribityllumazine synthase (156 aa).

5-amino-6-(D-ribitylamino)uracil-binding positions include Phe-22, 57-59 (AYE), and 81-83 (TVI). 86–87 (GT) serves as a coordination point for (2S)-2-hydroxy-3-oxobutyl phosphate. The active-site Proton donor is His-89. A 5-amino-6-(D-ribitylamino)uracil-binding site is contributed by Phe-114. Residue Arg-128 participates in (2S)-2-hydroxy-3-oxobutyl phosphate binding.

This sequence belongs to the DMRL synthase family. In terms of assembly, forms an icosahedral capsid composed of 60 subunits, arranged as a dodecamer of pentamers.

The enzyme catalyses (2S)-2-hydroxy-3-oxobutyl phosphate + 5-amino-6-(D-ribitylamino)uracil = 6,7-dimethyl-8-(1-D-ribityl)lumazine + phosphate + 2 H2O + H(+). It participates in cofactor biosynthesis; riboflavin biosynthesis; riboflavin from 2-hydroxy-3-oxobutyl phosphate and 5-amino-6-(D-ribitylamino)uracil: step 1/2. Catalyzes the formation of 6,7-dimethyl-8-ribityllumazine by condensation of 5-amino-6-(D-ribitylamino)uracil with 3,4-dihydroxy-2-butanone 4-phosphate. This is the penultimate step in the biosynthesis of riboflavin. The polypeptide is 6,7-dimethyl-8-ribityllumazine synthase (Mannheimia succiniciproducens (strain KCTC 0769BP / MBEL55E)).